Reading from the N-terminus, the 341-residue chain is L-threonine 3-dehydrogenase (341 aa).

Cys-38 contacts Zn(2+). Active-site charge relay system residues include Thr-40 and His-43. Zn(2+) is bound by residues His-63, Glu-64, Cys-93, Cys-96, Cys-99, and Cys-107. NAD(+)-binding positions include Ile-175, Asp-195, Arg-200, 262–264 (LGI), and 286–287 (IY).

The protein belongs to the zinc-containing alcohol dehydrogenase family. As to quaternary structure, homotetramer. The cofactor is Zn(2+).

It localises to the cytoplasm. It catalyses the reaction L-threonine + NAD(+) = (2S)-2-amino-3-oxobutanoate + NADH + H(+). It participates in amino-acid degradation; L-threonine degradation via oxydo-reductase pathway; glycine from L-threonine: step 1/2. In terms of biological role, catalyzes the NAD(+)-dependent oxidation of L-threonine to 2-amino-3-ketobutyrate. In Escherichia fergusonii (strain ATCC 35469 / DSM 13698 / CCUG 18766 / IAM 14443 / JCM 21226 / LMG 7866 / NBRC 102419 / NCTC 12128 / CDC 0568-73), this protein is L-threonine 3-dehydrogenase.